A 245-amino-acid chain; its full sequence is MDGSRTSLDIEEYSNTEVQKNQVLTLEEWQDKWVNGKTAFHLEQGHQLLKKHLDTFLKGKSGLRVFFPLCGKAVEMKWFANRGHSVVGVEISELGIREFFTEQNLSYTEEPITEIPGAKVFKSSSGNISLYCCSIFDFPRTNIGKLDMIWDRGALVAVNPGDRKRYADTMLSLLGKKFQCLLCVFSYDPTKHPGPPFYVPHAEIERLFGKICNIHCLEKVDAFEERHKSWGIDYLLEKLYLLTEK.

S14 carries the post-translational modification Phosphoserine. W29–F40 lines the S-adenosyl-L-methionine pocket. F40 lines the substrate pocket. K58 is modified (N6-acetyllysine). Residues L69, E90, S134–I135, and R152 contribute to the S-adenosyl-L-methionine site.

It belongs to the class I-like SAM-binding methyltransferase superfamily. TPMT family. Monomer.

The protein localises to the cytoplasm. It carries out the reaction S-adenosyl-L-methionine + a thiopurine = S-adenosyl-L-homocysteine + a thiopurine S-methylether.. This Chlorocebus aethiops (Green monkey) protein is Thiopurine S-methyltransferase (TPMT).